The sequence spans 309 residues: MIARFAPALAAVSPALHTALAPLLDHHAFAGWLSAPQVKELMQAGGLDEDALCFTLLPLAAAYAVTPLSHFNVGAIACGISGNLYFGANMEFLAAPLQQTVHAEQSAIAHAWLRGEKRLRALTVNYTPCGHCRQFMNELNSGTDLIICLPERSAATLASYLPDAFGPRDLAIQSLLLDEIDHAFAAAAWLDHDLSAPSPDDNDPLVSTALDAASRSHAPYSQSHSGVALQTQDGCVYAGRYAENAAFNPSLPPLQTALILMNAAGADDRQIRRAVLAERQNAPITQWPATNATLAALGCHEVHHLSLSL.

CMP/dCMP-type deaminase domains lie at 48–168 and 200–309; these read DEDA…FGPR and DDND…SLSL. 89–91 serves as a coordination point for substrate; the sequence is NME. A Zn(2+)-binding site is contributed by His102. Glu104 serves as the catalytic Proton donor. Residues Cys129 and Cys132 each contribute to the Zn(2+) site.

The protein belongs to the cytidine and deoxycytidylate deaminase family. In terms of assembly, homodimer. Requires Zn(2+) as cofactor.

It catalyses the reaction cytidine + H2O + H(+) = uridine + NH4(+). It carries out the reaction 2'-deoxycytidine + H2O + H(+) = 2'-deoxyuridine + NH4(+). Functionally, this enzyme scavenges exogenous and endogenous cytidine and 2'-deoxycytidine for UMP synthesis. The chain is Cytidine deaminase from Sodalis glossinidius (strain morsitans).